The following is a 46-amino-acid chain: uncharacterized protein (46 aa).

It is found in the plastid. Its subcellular location is the chloroplast. This is an uncharacterized protein from Trieres chinensis (Marine centric diatom).